We begin with the raw amino-acid sequence, 193 residues long: Cryptic protein (193 aa).

The first 25 residues, 1–25 (MFWRKHVRILFTVTLIWQAIHLGKG), serve as a signal peptide directing secretion. Asn-38 and Asn-60 each carry an N-linked (GlcNAc...) asparagine glycan. 2 disulfides stabilise this stretch: Cys-91-Cys-103 and Cys-105-Cys-114. Positions 91 to 115 (CQNGGTCILGAFCACPKHFSGRHCE) constitute an EGF-like domain.

The protein belongs to the EGF-CFC (Cripto-1/FRL1/Cryptic) family.

It is found in the cell membrane. It localises to the secreted. May play a role in mesoderm and/or neural patterning during gastrulation. In Gallus gallus (Chicken), this protein is Cryptic protein (CFC1).